A 291-amino-acid chain; its full sequence is NADH-cytochrome b5 reductase 2 (291 aa).

A helical membrane pass occupies residues 7–23 (PIAATSVVAAAASSYYF). The FAD-binding FR-type domain maps to 41-145 (DQWVDLKLKS…KGPIIKYQWQ (105 aa)). 148–183 (LHKEITLIGAGTGITPLYQLISAINKNPEDKTKVNL) serves as a coordination point for FAD.

The protein belongs to the flavoprotein pyridine nucleotide cytochrome reductase family. It depends on FAD as a cofactor.

Its subcellular location is the mitochondrion outer membrane. It catalyses the reaction 2 Fe(III)-[cytochrome b5] + NADH = 2 Fe(II)-[cytochrome b5] + NAD(+) + H(+). Its function is as follows. May mediate the reduction of outer membrane cytochrome b5. This Yarrowia lipolytica (strain CLIB 122 / E 150) (Yeast) protein is NADH-cytochrome b5 reductase 2 (MCR1).